The sequence spans 175 residues: Protein LAZY 3 (175 aa).

The segment at 9-39 (RKLSGKKRVPTSDSSQEPSSPPLSKEVQGLP) is disordered. The short motif at 44 to 50 (TFLAIGT) is the IGT motif element.

This sequence belongs to the LAZY family. As to expression, specifically expressed in roots. Expressed in root tips of young seedlings.

Its function is as follows. Involved in the regulation of root gravitropism. Functions redundantly with LAZY2 and LAZY4 in the control of root gravitropism. Functions redundantly with LAZY1, LAZY2 and LAZY4 to control plant architecture by coupling gravity sensing to the formation of auxin gradients. This Arabidopsis thaliana (Mouse-ear cress) protein is Protein LAZY 3.